The sequence spans 36 residues: Potassium channel toxin alpha-KTx 16.9 (36 aa).

3 cysteine pairs are disulfide-bonded: Cys7–Cys28, Cys13–Cys33, and Cys17–Cys35.

Belongs to the short scorpion toxin superfamily. Potassium channel inhibitor family. Alpha-KTx 16 subfamily. In terms of tissue distribution, expressed by the venom gland.

The protein resides in the secreted. Poorly competes with (125)I-kaliotoxin binding on rat brain synaptosome (IC(50)&gt;100 nM). Is a poor Kv1.3/KCNA3 ligand. May have as real target KCa1.1/KCNMA1 channel. Shows weak toxicity on mice. The chain is Potassium channel toxin alpha-KTx 16.9 from Buthus paris (Scorpion).